Reading from the N-terminus, the 187-residue chain is UPF0301 protein Clim_0777 (187 aa).

Belongs to the UPF0301 (AlgH) family.

The protein is UPF0301 protein Clim_0777 of Chlorobium limicola (strain DSM 245 / NBRC 103803 / 6330).